The chain runs to 336 residues: ATP-dependent 6-phosphofructokinase (336 aa).

Glycine 11 contacts ATP. Position 21 to 25 (21 to 25 (RAVVR)) interacts with ADP. ATP-binding positions include 72–73 (RY) and 102–105 (GDGS). Aspartate 103 lines the Mg(2+) pocket. 125–127 (TID) lines the substrate pocket. Aspartate 127 serves as the catalytic Proton acceptor. An ADP-binding site is contributed by arginine 154. Residues arginine 162 and 169 to 171 (MGR) each bind substrate. ADP-binding positions include 185-187 (GAD), lysine 211, and 213-215 (KKH). Residues glutamate 222, arginine 244, and 250-253 (HIQR) each bind substrate.

It belongs to the phosphofructokinase type A (PFKA) family. ATP-dependent PFK group I subfamily. Prokaryotic clade 'B1' sub-subfamily. In terms of assembly, homotetramer. Mg(2+) is required as a cofactor.

The protein localises to the cytoplasm. It catalyses the reaction beta-D-fructose 6-phosphate + ATP = beta-D-fructose 1,6-bisphosphate + ADP + H(+). The protein operates within carbohydrate degradation; glycolysis; D-glyceraldehyde 3-phosphate and glycerone phosphate from D-glucose: step 3/4. With respect to regulation, allosterically activated by ADP and other diphosphonucleosides, and allosterically inhibited by phosphoenolpyruvate. Functionally, catalyzes the phosphorylation of D-fructose 6-phosphate to fructose 1,6-bisphosphate by ATP, the first committing step of glycolysis. This Streptococcus suis (strain 05ZYH33) protein is ATP-dependent 6-phosphofructokinase.